Reading from the N-terminus, the 630-residue chain is MASLCSNSSSTSLKTPFTSSTTCLSSTPTASQLFLHGKRNKTFKVSCKVTNTNGNQDETNSVDRRNVLLGLGGLYGVANAIPLAASAAPTPPPDLSSCNKPKINATTEVPYFCCAPKPDDMSKVPYYKFPSVTKLRIRPPAHALDEAYIAKYNLAISRMKDLDKTQPDNPIGFKQQANIHCAYCNGGYSIDGKVLQVHNSWLFFPFHRWYLYFYERILGSLIDDPTFGLPFWNWDHPKGMRFPPMFDVPGTALYDERRGDQIHNGNGIDLGYFGDQVETTQLQLMTNNLTLMYRQLVTNSPCPLMSLVDLTLFGSTVEDAGTVENIPHSPVHIWVGTRRGSVLPVGKISNGEDMGNFYSAGLDPLFYCHHSNVDRMWNEWKATGGKRTDIQNKDWLNSEFFFYDENGNPFKVRVRDCLDTKKMGYDYHATATPWRNFKPKTKASAGKVNTGSIPPESQVFPLAKLDKAISFSINRPASSRTQQEKNAQEEVLTFNAIKYDNRDYIRFDVFLNVDNNVNANELDKAEFAGSYTSLPHVHRVGDPKHTATATLRLAITELLEDIGLEDEDTIAVTLVPKKGDISIGGVEIKLAIVKLVCVVNLLTLQLNKDRFCYDSVFVCWFVCLFFNFHV.

Positions 1–25 are disordered; that stretch reads MASLCSNSSSTSLKTPFTSSTTCLS. The N-terminal 87 residues, 1–87, are a transit peptide targeting the chloroplast; sequence MASLCSNSSS…ANAIPLAASA (87 aa). 2 cysteine pairs are disulfide-bonded: Cys98–Cys114 and Cys113–Cys181. Residues His180, His198, His207, His328, His332, and His370 each coordinate Cu cation. The 2'-(S-cysteinyl)-histidine (Cys-His) cross-link spans 184–198; that stretch reads CNGGYSIDGKVLQVH.

The protein belongs to the tyrosinase family. The cofactor is Cu(2+).

The protein resides in the plastid. It is found in the chloroplast thylakoid lumen. The enzyme catalyses 2 catechol + O2 = 2 1,2-benzoquinone + 2 H2O. Functionally, catalyzes the oxidation of mono- and o-diphenols to o-diquinones. The chain is Polyphenol oxidase A, chloroplastic from Solanum lycopersicum (Tomato).